A 104-amino-acid polypeptide reads, in one-letter code: Large ribosomal subunit protein uL24 (104 aa).

The protein belongs to the universal ribosomal protein uL24 family. As to quaternary structure, part of the 50S ribosomal subunit.

Functionally, one of two assembly initiator proteins, it binds directly to the 5'-end of the 23S rRNA, where it nucleates assembly of the 50S subunit. Its function is as follows. One of the proteins that surrounds the polypeptide exit tunnel on the outside of the subunit. The sequence is that of Large ribosomal subunit protein uL24 from Psychromonas ingrahamii (strain DSM 17664 / CCUG 51855 / 37).